A 467-amino-acid polypeptide reads, in one-letter code: Transcription factor fos-1 (467 aa).

Positions 1 to 22 (MFEQPSSTTNTTTSSGSGSDSN) are enriched in low complexity. Disordered regions lie at residues 1 to 38 (MFEQPSSTTNTTTSSGSGSDSNHYFELGPRNPINQAHP) and 139 to 179 (QYST…AAAR). The 64-residue stretch at 163-226 (DDKRLKRRQR…NSLKNYLETH (64 aa)) folds into the bZIP domain. The tract at residues 165–205 (KRLKRRQRNKEAAARCRQRRIDLMKELQDQVNDFKNSNDKK) is basic motif. The leucine-zipper stretch occupies residues 212 to 219 (IRNKLNSL). 2 disordered regions span residues 266–291 (RADSVPYSIRSGHSSSSSEQHSPVED) and 395–467 (QPIT…LRPL). The segment covering 273-286 (SIRSGHSSSSSEQH) has biased composition (low complexity). The span at 434–454 (SSNTGLTPSGQPTMNFVSTPT) shows a compositional bias: polar residues. A phosphothreonine mark is found at Thr-440, Thr-452, and Thr-454.

It belongs to the bZIP family. Fos subfamily. In terms of assembly, homodimer. Heterodimer; with jun-1. Interacts with kgb-1 and hda-1. In terms of processing, may be phosphorylated by kgb-1. Phosphorylation at Thr-440 increases sensitivity to heavy metal stress. Phosphorylation inhibits homodimer formation, and promotes association with target promoters. As to expression, expressed in anchor cells. Isoform a is expressed in somatic gonad cells that neighbor anchor cells. Isoform b is expressed in vulval cells, the uterine cells that neighbor anchor cells and the spermatheca.

The protein resides in the nucleus. Its function is as follows. Developmentally regulated transcription factor which binds and recognizes the enhancer DNA sequence 5'-TGA[CG]TCA-3'. Functionally, plays a role the development of the reproductive system, controlling events including anchor cell (AC) fusion and invasion. Regulates downstream transcriptional targets, including zmp-1, cdh-3, him-4 and mig10b, to promote the removal of the gonadal basement membrane during AC invasion. Regulates aff-1 expression to promote AC fusion. With jun-1 regulates egl-1 and lin-12 expression to allow uterine cell specification and development. Required for ovulation. Controls plc-1 expression in the spermatheca to regulate spermathecal valve dilation. Acts with hda-1 as a downstream repressor of the kgb-1 mediated stress response pathway that transcriptionally represses genes involved in the response to heavy metals, such as kreg-1. This chain is Transcription factor fos-1, found in Caenorhabditis elegans.